The following is a 92-amino-acid chain: MHGERPSLEDITLILEEIPEIVDLHCDEQFDNSEEDTNYQLTEPAVQAYGVVTTCCKCHSTVRLVVECGAADIRHLEQLFLNTLTIVCPRCV.

An E7 terminal domain region spans residues 1 to 43; the sequence is MHGERPSLEDITLILEEIPEIVDLHCDEQFDNSEEDTNYQLTE. The short motif at 24-28 is the LXCXE motif; interaction with host RB1 and TMEM173/STING element; the sequence is LHCDE. Residues 55–91 fold into a zinc finger; that stretch reads CCKCHSTVRLVVECGAADIRHLEQLFLNTLTIVCPRC. Positions 73–81 match the Nuclear export signal motif; sequence IRHLEQLFL.

This sequence belongs to the papillomaviridae E7 protein family. In terms of assembly, homodimer. Homooligomer. Interacts with host RB1; this interaction induces dissociation of RB1-E2F1 complex thereby disrupting RB1 activity. Interacts with host EP300; this interaction represses EP300 transcriptional activity. Interacts with protein E2; this interaction inhibits E7 oncogenic activity. Interacts with host TMEM173/STING; this interaction impairs the ability of TMEM173/STING to sense cytosolic DNA and promote the production of type I interferon (IFN-alpha and IFN-beta). Highly phosphorylated.

The protein resides in the host cytoplasm. Its subcellular location is the host nucleus. Functionally, plays a role in viral genome replication by driving entry of quiescent cells into the cell cycle. Stimulation of progression from G1 to S phase allows the virus to efficiently use the cellular DNA replicating machinery to achieve viral genome replication. E7 protein has both transforming and trans-activating activities. Induces the disassembly of the E2F1 transcription factor from RB1, with subsequent transcriptional activation of E2F1-regulated S-phase genes. Interferes with host histone deacetylation mediated by HDAC1 and HDAC2, leading to transcription activation. Also plays a role in the inhibition of both antiviral and antiproliferative functions of host interferon alpha. Interaction with host TMEM173/STING impairs the ability of TMEM173/STING to sense cytosolic DNA and promote the production of type I interferon (IFN-alpha and IFN-beta). The protein is Protein E7 of Homo sapiens (Human).